A 247-amino-acid polypeptide reads, in one-letter code: Adenosylcobinamide-GDP ribazoletransferase (247 aa).

5 helical membrane passes run 34 to 54, 59 to 79, 113 to 133, 138 to 158, and 194 to 214; these read IITFPLIGLLLGAISGLVFMV, CGVPLAALFSVLVLALMTGGF, GGLALIFVVLAKILVLSELAL, ILASLAAACAVSRGTAALLMY, and VLLPGMHGVAAMVVTMVAIFI.

Belongs to the CobS family. Requires Mg(2+) as cofactor.

Its subcellular location is the cell inner membrane. It catalyses the reaction alpha-ribazole + adenosylcob(III)inamide-GDP = adenosylcob(III)alamin + GMP + H(+). The enzyme catalyses alpha-ribazole 5'-phosphate + adenosylcob(III)inamide-GDP = adenosylcob(III)alamin 5'-phosphate + GMP + H(+). The protein operates within cofactor biosynthesis; adenosylcobalamin biosynthesis; adenosylcobalamin from cob(II)yrinate a,c-diamide: step 7/7. In terms of biological role, joins adenosylcobinamide-GDP and alpha-ribazole to generate adenosylcobalamin (Ado-cobalamin). Also synthesizes adenosylcobalamin 5'-phosphate from adenosylcobinamide-GDP and alpha-ribazole 5'-phosphate. The protein is Adenosylcobinamide-GDP ribazoletransferase of Escherichia coli (strain 55989 / EAEC).